The chain runs to 658 residues: Transcription factor cep-1 (658 aa).

Residues 238 to 428 mediate DNA binding; the sequence is EEWLTFEVKK…RDWKNFCEKR (191 aa). Zn(2+)-binding residues include C319, H322, C375, and C379. The disordered stretch occupies residues 450–477; sequence QSSLHSGPSSPEKVTDTSQMFQSTSSSS. The span at 466–476 shows a compositional bias: low complexity; it reads TSQMFQSTSSS. The required for tertiary structure stability of the protein stretch occupies residues 535–564; that stretch reads QYGLQRQVKLSEKEYSKFVAFFAKEGENEI.

The protein belongs to the p53 family. Homodimer. Interacts (via C-terminus domain) with prmt-5; not methylated by prmt-5. Interacts with cbp-1 (via HAT domain); cep-1 transcriptional activity may be inhibited by interaction with methylated cbp-1. Component of a complex that contains prmt-5 and cbp-1. Interacts with ape-1; the interaction inhibits pro-apoptotic activity of cep-1. Requires Zn(2+) as cofactor. Phosphorylated in response to IR-induced DNA damage which is thought to be mediated by akt-1.

Its subcellular location is the nucleus. Functionally, transcriptional activator that binds the same DNA consensus sequence as p53. Has a role in normal development to ensure proper meiotic chromosome segregation. Promotes apoptosis under conditions of cellular and genotoxic stress in response to DNA damage, hypoxia, or starvation. However, not required for DNA repair in response to UV-C or to regulate cell-cycle progression. Regulates germline apoptosis in response to DNA damage. Required for induction of ced-13 in response to DNA damage. Its pro-apoptotic activity is inhibited when bound to ape-1 in vitro. Regulates germline proliferation by activating phg-1. Regulates DNA damage-induced apoptosis by inducing transcription of the programmed cell death activator egl-1. Negatively regulates lifespan. The chain is Transcription factor cep-1 from Caenorhabditis briggsae.